Reading from the N-terminus, the 505-residue chain is Serine carboxypeptidase-like 47 (505 aa).

Residues 1-22 (MEAKTFFLFMLFIFSQSWLSTS) form the signal peptide. N-linked (GlcNAc...) asparagine glycans are attached at residues asparagine 37, asparagine 86, and asparagine 122. Disulfide bonds link cysteine 138–cysteine 378, cysteine 306–cysteine 321, and cysteine 344–cysteine 349. The active site involves serine 228. An N-linked (GlcNAc...) asparagine glycan is attached at asparagine 301. The active site involves aspartate 416. 2 N-linked (GlcNAc...) asparagine glycosylation sites follow: asparagine 432 and asparagine 444. Histidine 473 is a catalytic residue.

The protein belongs to the peptidase S10 family. As to expression, expressed in roots, flowers and siliques.

The protein resides in the secreted. Probable carboxypeptidase. This chain is Serine carboxypeptidase-like 47 (SCPL47), found in Arabidopsis thaliana (Mouse-ear cress).